The following is a 371-amino-acid chain: Poly(rC)-binding protein 3 (371 aa).

KH domains follow at residues 45-95, 129-182, and 293-357; these read TLTI…TITG, PVTL…TISG, and ASTH…QYLI.

Widely expressed, with highest levels in testis and fat tissues and lowest in heart.

The protein resides in the cytoplasm. In terms of biological role, single-stranded nucleic acid binding protein that binds preferentially to oligo dC. The protein is Poly(rC)-binding protein 3 (Pcbp3) of Mus musculus (Mouse).